Reading from the N-terminus, the 312-residue chain is Ribonuclease HIII (312 aa).

In terms of domain architecture, RNase H type-2 spans 95–311; that stretch reads FNCIGSDEAG…REKAQKILKP (217 aa). Residues aspartate 101, glutamate 102, and aspartate 206 each coordinate a divalent metal cation.

Belongs to the RNase HII family. RnhC subfamily. It depends on Mn(2+) as a cofactor. The cofactor is Mg(2+).

The protein localises to the cytoplasm. It carries out the reaction Endonucleolytic cleavage to 5'-phosphomonoester.. Endonuclease that specifically degrades the RNA of RNA-DNA hybrids. The protein is Ribonuclease HIII of Staphylococcus aureus (strain MW2).